The primary structure comprises 293 residues: tRNA pseudouridine synthase B (293 aa).

Asp39 functions as the Nucleophile in the catalytic mechanism.

It belongs to the pseudouridine synthase TruB family. Type 1 subfamily.

It carries out the reaction uridine(55) in tRNA = pseudouridine(55) in tRNA. In terms of biological role, responsible for synthesis of pseudouridine from uracil-55 in the psi GC loop of transfer RNAs. In Thermobifida fusca (strain YX), this protein is tRNA pseudouridine synthase B.